Consider the following 175-residue polypeptide: Ribulose bisphosphate carboxylase small subunit, chloroplastic 2 (175 aa).

The N-terminal 46 residues, 1–46 (MAPTVMASSATSVAPFQGLKSTAGLPVSRRSTNSGFGNVSNGGRIK), are a transit peptide targeting the chloroplast.

Belongs to the RuBisCO small chain family. Heterohexadecamer of 8 large and 8 small subunits.

The protein localises to the plastid. It localises to the chloroplast. Functionally, ruBisCO catalyzes two reactions: the carboxylation of D-ribulose 1,5-bisphosphate, the primary event in carbon dioxide fixation, as well as the oxidative fragmentation of the pentose substrate. Both reactions occur simultaneously and in competition at the same active site. Although the small subunit is not catalytic it is essential for maximal activity. This is Ribulose bisphosphate carboxylase small subunit, chloroplastic 2 from Oryza sativa subsp. japonica (Rice).